The following is a 911-amino-acid chain: Transcription factor E2F7 (911 aa).

S94 carries the phosphoserine modification. Residues 141–210 (RKQKSLGLLC…VAKNQYSWHG (70 aa)) mediate DNA binding. Disordered regions lie at residues 239–281 (QKEL…ANSR), 409–433 (SFNS…PYRQ), and 565–706 (SPGS…SPLQ). Residues 243–257 (NPIDHKSGERRRDGC) show a composition bias toward basic and acidic residues. A DNA-binding region spans residues 281–366 (RKDKSLKIMS…GRKPAFKWIG (86 aa)). The residue at position 409 (S409) is a Phosphoserine. Residues 415–424 (ASERTQRKVN) show a composition bias toward basic and acidic residues. The segment covering 566–579 (PGSGSGSGSVGGGS) has biased composition (gly residues). Residues 599 to 621 (ERRLQEEEEEPATKRQCRDHEDG) are compositionally biased toward basic and acidic residues. Positions 669–687 (KATTNGFVSSEWGNPCSNT) are enriched in polar residues. The segment covering 688–698 (EIEKPSEENES) has biased composition (basic and acidic residues). Phosphoserine is present on S840. Residues 873 to 911 (FFKTPGSLGDPVLRRKERNQSRSSSSAQRRLEISSGGTD) form a disordered region.

Belongs to the E2F/DP family. Homodimer and heterodimer: mainly forms homodimers and, to a lesser extent, heterodimers with E2F8. Dimerization is important for DNA-binding. Interacts with HIF1A. Interacts with MN1.

The protein resides in the nucleus. Its function is as follows. Atypical E2F transcription factor that participates in various processes such as angiogenesis, polyploidization of specialized cells and DNA damage response. Mainly acts as a transcription repressor that binds DNA independently of DP proteins and specifically recognizes the E2 recognition site 5'-TTTC[CG]CGC-3'. Directly represses transcription of classical E2F transcription factors such as E2F1. Acts as a regulator of S-phase by recognizing and binding the E2-related site 5'-TTCCCGCC-3' and mediating repression of G1/S-regulated genes. Plays a key role in polyploidization of cells in placenta and liver by regulating the endocycle, probably by repressing genes promoting cytokinesis and antagonizing action of classical E2F proteins (E2F1, E2F2 and/or E2F3). Required for placental development by promoting polyploidization of trophoblast giant cells. Also involved in DNA damage response: up-regulated by p53/TP53 following genotoxic stress and acts as a downstream effector of p53/TP53-dependent repression by mediating repression of indirect p53/TP53 target genes involved in DNA replication. Acts as a promoter of sprouting angiogenesis, possibly by acting as a transcription activator: associates with HIF1A, recognizes and binds the VEGFA promoter, which is different from canonical E2 recognition site, and activates expression of the VEGFA gene. Acts as a negative regulator of keratinocyte differentiation. In Bos taurus (Bovine), this protein is Transcription factor E2F7 (E2F7).